An 898-amino-acid chain; its full sequence is Chloride channel protein 2 (898 aa).

Position 2 is an N-acetylalanine (A2). Residues 2–87 (AAAAAEEGME…RCHKFLVSRV (86 aa)) are Cytoplasmic-facing. The segment at 16–34 (QYEQTLMYGRYTQDLGAFA) is essential for channel gating by both voltage and cell volume. T20 is modified (phosphothreonine). A modulates channel gating by both voltage and cell volume region spans residues 36–49 (EEAARIRLGGPEPW). Transmembrane regions (helical) follow at residues 88-121 (GEDW…AQQW) and 130-155 (ILLQ…TQIL). The short motif at 161-165 (GSGIP) is the Selectivity filter part_1 element. S162 provides a ligand contact to chloride. An intramembrane region (helical) is located at residues 164–171 (IPEMKTIL). 2 helical membrane-spanning segments follow: residues 180–198 (LTLK…ALGS) and 205–223 (EGPF…SKFL). Residues 203-207 (GKEGP) carry the Selectivity filter part_2 motif. 2 intramembrane regions (helical) span residues 239–251 (MLAA…VGCC) and 255–263 (PIGGVLFSI). 5 helical membrane passes run 275 to 295 (YWRG…LAVW), 321 to 349 (LPAF…VQVM), 358 to 377 (FLMR…ISTL), 429 to 449 (ANVF…SALA), and 457 to 480 (GAFM…MAAW). Positions 457 to 461 (GAFMP) match the Selectivity filter part_3 motif. Residue F459 participates in chloride binding. The segment at residues 497 to 511 (GGYAVVGAAALAGAV) is an intramembrane region (helical). The note=Loop between two helices intramembrane region spans 512–513 (TH). The helical intramembrane region spans 514 to 525 (TVSTAVIVFELT). The segment at residues 526–530 (GQIAH) is an intramembrane region (note=Loop between two helices). The chain crosses the membrane as a helical span at residues 531 to 548 (ILPVMIAVILANAVAQSL). The Cytoplasmic portion of the chain corresponds to 549 to 898 (QPSLYDSIIR…SPSDSDDKCQ (350 aa)). Y553 provides a ligand contact to chloride. The 59-residue stretch at 584–642 (MVRDVPHVALSCTFRDLRLALHRTKGRMLALVESPESMILLGSIERSQVVALLGAQLSP) folds into the CBS 1 domain. Disordered stretches follow at residues 643–672 (ARRR…PEAS) and 686–717 (AARG…TGSA). Over residues 705-717 (VTRNLGESPTGSA) the composition is skewed to polar residues. Phosphoserine is present on residues S712 and S758. The CBS 2 domain maps to 790-850 (IDPAPFQLVE…GSVTAQGVKV (61 aa)). The Basolateral membrane sorting motif lies at 812–813 (LL). Residues 856–898 (SFRDSATSSSDTETTEVHALWGPHSRHGLPREGSPSDSDDKCQ) form a disordered region.

This sequence belongs to the chloride channel (TC 2.A.49) family. ClC-2/CLCN2 subfamily. In terms of assembly, homodimer. Interacts with auxiliary subunit HEPACAM. In terms of processing, phosphorylated. Activated by dephosphorylation. Ubiquitously expressed. Moderately expressed in aortic and coronary vascular smooth muscle cells and expressed at a low level in aortic endothelial cells. Expressed in the adrenal gland, predominantly in the zona glomerulosa. Expressed in white mater perivascular astrocytes and ependymal cells (at protein level).

It localises to the cell membrane. Its subcellular location is the basolateral cell membrane. The protein localises to the cell projection. It is found in the dendritic spine membrane. The protein resides in the axon. It carries out the reaction chloride(in) = chloride(out). The enzyme catalyses thiocyanate(in) = thiocyanate(out). It catalyses the reaction bromide(in) = bromide(out). The catalysed reaction is nitrate(in) = nitrate(out). It carries out the reaction iodide(out) = iodide(in). Its activity is regulated as follows. Common gate kinetics are down-regulated by intracellular ATP. Inhibited by AK-42, a derivative of meclofenamate. Inhibited by Cd(2+). Inhibited by Zn(2+) and PKC activation. Inhibited at acidic pH. CCLN2:HEPACAM channel conductance is up-regulated upon hypo-osmolarity. In terms of biological role, voltage-gated and osmosensitive chloride channel. Forms a homodimeric channel where each subunit has its own ion conduction pathway. Conducts double-barreled currents controlled by two types of gates, two fast glutamate gates that control each subunit independently and a slow common gate that opens and shuts off both subunits simultaneously. Displays inward rectification currents activated upon membrane hyperpolarization and extracellular hypotonicity. Contributes to chloride conductance involved in neuron excitability. In hippocampal neurons, generates a significant part of resting membrane conductance and provides an additional chloride efflux pathway to prevent chloride accumulation in dendrites upon GABA receptor activation. In glia, associates with the auxiliary subunit HEPACAM/GlialCAM at astrocytic processes and myelinated fiber tracts where it may regulate transcellular chloride flux buffering extracellular chloride and potassium concentrations. Regulates aldosterone production in adrenal glands. The opening of CLCN2 channels at hyperpolarized membrane potentials in the glomerulosa causes cell membrane depolarization, activation of voltage-gated calcium channels and increased expression of aldosterone synthase, the rate-limiting enzyme for aldosterone biosynthesis. Contributes to chloride conductance in retinal pigment epithelium involved in phagocytosis of shed photoreceptor outer segments and photoreceptor renewal. Conducts chloride currents at the basolateral membrane of epithelial cells with a role in chloride reabsorption rather than secretion. Permeable to small monovalent anions with chloride &gt; thiocyanate &gt; bromide &gt; nitrate &gt; iodide ion selectivity. The chain is Chloride channel protein 2 from Homo sapiens (Human).